The following is a 183-amino-acid chain: MGYPGKSHKTYDRPRKPWEADRMANEVELIKTYGLRNKRELWKAESILRKYRRVGRMLLASKARGEARADIEAAAVINRLSRFGILKDGADLDAILSLKITDILERRLQTQVYRQGLANTIRQARQFITHGHIQVAGQRVTVPSYLVKRGDEMTIDYYAGSPLAREGHPERSSKIVARTGGSA.

The S4 RNA-binding domain maps to 106 to 168; that stretch reads RRLQTQVYRQ…AGSPLAREGH (63 aa).

Belongs to the universal ribosomal protein uS4 family. In terms of assembly, part of the 30S ribosomal subunit. Contacts protein S5. The interaction surface between S4 and S5 is involved in control of translational fidelity.

Its function is as follows. One of the primary rRNA binding proteins, it binds directly to 16S rRNA where it nucleates assembly of the body of the 30S subunit. With S5 and S12 plays an important role in translational accuracy. In Methanothrix thermoacetophila (strain DSM 6194 / JCM 14653 / NBRC 101360 / PT) (Methanosaeta thermophila), this protein is Small ribosomal subunit protein uS4.